A 756-amino-acid chain; its full sequence is Polyribonucleotide nucleotidyltransferase (756 aa).

Mg(2+)-binding residues include aspartate 547 and aspartate 553. The 60-residue stretch at 613-672 folds into the KH domain; the sequence is PRITSVTIPVNKIGELIGPKGKTINAITEETGADVSIEEDGTVYISAATGEAADAAIDRV. The 70-residue stretch at 684–753 folds into the S1 motif domain; sequence GERFLGTVVK…NRGKISLVPV (70 aa).

This sequence belongs to the polyribonucleotide nucleotidyltransferase family. Mg(2+) is required as a cofactor.

The protein resides in the cytoplasm. The enzyme catalyses RNA(n+1) + phosphate = RNA(n) + a ribonucleoside 5'-diphosphate. Functionally, involved in mRNA degradation. Catalyzes the phosphorolysis of single-stranded polyribonucleotides processively in the 3'- to 5'-direction. The chain is Polyribonucleotide nucleotidyltransferase from Corynebacterium aurimucosum (strain ATCC 700975 / DSM 44827 / CIP 107346 / CN-1) (Corynebacterium nigricans).